A 197-amino-acid polypeptide reads, in one-letter code: NADH-quinone oxidoreductase subunit C (197 aa).

It belongs to the complex I 30 kDa subunit family. As to quaternary structure, NDH-1 is composed of 14 different subunits. Subunits NuoB, C, D, E, F, and G constitute the peripheral sector of the complex.

Its subcellular location is the cell inner membrane. The catalysed reaction is a quinone + NADH + 5 H(+)(in) = a quinol + NAD(+) + 4 H(+)(out). Its function is as follows. NDH-1 shuttles electrons from NADH, via FMN and iron-sulfur (Fe-S) centers, to quinones in the respiratory chain. The immediate electron acceptor for the enzyme in this species is believed to be ubiquinone. Couples the redox reaction to proton translocation (for every two electrons transferred, four hydrogen ions are translocated across the cytoplasmic membrane), and thus conserves the redox energy in a proton gradient. The polypeptide is NADH-quinone oxidoreductase subunit C (Rickettsia typhi (strain ATCC VR-144 / Wilmington)).